The chain runs to 442 residues: D-galactonate dehydratase family member SSLG_02014 (442 aa).

Position 161 (H161) interacts with substrate. Y197 (proton donor/acceptor) is an active-site residue. D246 lines the Mg(2+) pocket. H248 functions as the Proton donor/acceptor in the catalytic mechanism. Residues E272 and E298 each contribute to the Mg(2+) site. Residues E298, R319, H348, D352, and E375 each contribute to the substrate site.

It belongs to the mandelate racemase/muconate lactonizing enzyme family. GalD subfamily. Mg(2+) is required as a cofactor.

The enzyme catalyses D-mannonate = 2-dehydro-3-deoxy-D-gluconate + H2O. Its function is as follows. Has low D-mannonate dehydratase activity (in vitro), suggesting that this is not a physiological substrate and that it has no significant role in D-mannonate degradation in vivo. Has no detectable activity with a panel of 70 other acid sugars (in vitro). The polypeptide is D-galactonate dehydratase family member SSLG_02014 (Streptomyces sp. (strain SPB78)).